Reading from the N-terminus, the 142-residue chain is Large ribosomal subunit protein uL13 (142 aa).

It belongs to the universal ribosomal protein uL13 family. In terms of assembly, part of the 50S ribosomal subunit.

This protein is one of the early assembly proteins of the 50S ribosomal subunit, although it is not seen to bind rRNA by itself. It is important during the early stages of 50S assembly. The chain is Large ribosomal subunit protein uL13 from Buchnera aphidicola subsp. Cinara cedri (strain Cc).